A 248-amino-acid chain; its full sequence is tRNA (guanine-N(1)-)-methyltransferase (248 aa).

S-adenosyl-L-methionine is bound by residues Gly-113 and 133 to 138 (VGDYVL).

Belongs to the RNA methyltransferase TrmD family. In terms of assembly, homodimer.

The protein resides in the cytoplasm. The enzyme catalyses guanosine(37) in tRNA + S-adenosyl-L-methionine = N(1)-methylguanosine(37) in tRNA + S-adenosyl-L-homocysteine + H(+). Specifically methylates guanosine-37 in various tRNAs. This chain is tRNA (guanine-N(1)-)-methyltransferase, found in Shewanella oneidensis (strain ATCC 700550 / JCM 31522 / CIP 106686 / LMG 19005 / NCIMB 14063 / MR-1).